The following is a 1383-amino-acid chain: PAS domain-containing serine/threonine-protein kinase (1383 aa).

Methionine 1 is subject to N-acetylmethionine. Serine 19 is subject to Phosphoserine. Threonine 31 carries the phosphothreonine modification. 2 consecutive PAS domains span residues 117-188 (SGSL…VEAD) and 333-400 (YQAS…SVQL). At serine 1000 the chain carries Phosphoserine. Positions 1059–1311 (YNTISPLGSG…LEKLIRDPWV (253 aa)) constitute a Protein kinase domain. Residues 1065–1073 (LGSGAFGFV), lysine 1088, and 1142–1149 (EKHGSGMD) each bind ATP. The Proton acceptor role is filled by aspartate 1188. Residue aspartate 1206 participates in ATP binding. Threonine 1221 and threonine 1225 each carry phosphothreonine; by autocatalysis. The disordered stretch occupies residues 1344 to 1383 (GSRSPSEMAQREGLCGPPAPRETRGDQHCLHLKDPSLPVS). Over residues 1364-1377 (RETRGDQHCLHLKD) the composition is skewed to basic and acidic residues.

It belongs to the protein kinase superfamily. CAMK Ser/Thr protein kinase family. Post-translationally, autophosphorylated on Thr-1221 and Thr-1225. Autophosphorylation is activated by phospholipids. Ubiquitously expressed. Strongly up-regulated in postmeiotic germ cells during spermatogenesis.

The protein resides in the cytoplasm. It is found in the nucleus. The enzyme catalyses L-seryl-[protein] + ATP = O-phospho-L-seryl-[protein] + ADP + H(+). It carries out the reaction L-threonyl-[protein] + ATP = O-phospho-L-threonyl-[protein] + ADP + H(+). With respect to regulation, protein kinase activity is inhibited by the first PAS domain: binding of an unidentified ligand desinhibits the protein kinase activity. May be activated by autophosphorylation on Thr-1221 and Thr-1225. Autophosphorylation is enhanced upon phosphatidylinositol monophosphate (phosphatidylinositol 4-phosphate) binding and inhibited upon phosphatidylinositol bi- and tri-phosphate binding. In contrast, phosphorylation of target proteins is inhibited upon all phosphatidylinositol-binding (phosphatidylinositol mono- bi- and tri-phosphate). In terms of biological role, serine/threonine-protein kinase involved in energy homeostasis and protein translation. Phosphorylates EEF1A1, GYS1, PDX1 and RPS6. Probably plays a role under changing environmental conditions (oxygen, glucose, nutrition), rather than under standard conditions. Acts as a sensor involved in energy homeostasis: regulates glycogen synthase synthesis by mediating phosphorylation of GYS1, leading to GYS1 inactivation. May be involved in glucose-stimulated insulin production in pancreas and regulation of glucagon secretion by glucose in alpha cells; however such data require additional evidences. May play a role in regulation of protein translation by phosphorylating EEF1A1, leading to increase translation efficiency. May also participate in respiratory regulation. This chain is PAS domain-containing serine/threonine-protein kinase (Pask), found in Mus musculus (Mouse).